Here is a 201-residue protein sequence, read N- to C-terminus: Alpha-1-acid glycoprotein 1 (201 aa).

The signal sequence occupies residues 1 to 18 (MALSWVLTVLSLLPLLEA). Gln-19 is modified (pyrrolidone carboxylic acid). Cystine bridges form between Cys-23/Cys-165 and Cys-90/Cys-183. N-linked (GlcNAc...) (complex) asparagine glycosylation occurs at Asn-33. Asn-56 carries N-linked (GlcNAc...) asparagine glycosylation. N-linked (GlcNAc...) (complex) asparagine glycosylation is present at Asn-72. 2 N-linked (GlcNAc...) asparagine glycosylation sites follow: Asn-93 and Asn-103.

This sequence belongs to the calycin superfamily. Lipocalin family. Post-translationally, N-glycosylated. N-glycan heterogeneity at Asn-33: Hex5HexNAc4 (minor), Hex6HexNAc5 (major) and dHex1Hex6HexNAc5 (minor). As to expression, expressed by the liver and secreted in plasma.

The protein localises to the secreted. Functionally, functions as a transport protein in the blood stream. Binds various ligands in the interior of its beta-barrel domain. Also binds synthetic drugs and influences their distribution and availability in the body. Appears to function in modulating the activity of the immune system during the acute-phase reaction. The sequence is that of Alpha-1-acid glycoprotein 1 (ORM1) from Homo sapiens (Human).